The sequence spans 301 residues: Acetyl-coenzyme A carboxylase carboxyl transferase subunit beta (301 aa).

Residues 25–294 enclose the CoA carboxyltransferase N-terminal domain; the sequence is LWIKDPSTGE…NSDAPEHEKT (270 aa). Residues 282–301 form a disordered region; the sequence is QPGNSDAPEHEKTEATDKAA. The segment covering 288–301 has biased composition (basic and acidic residues); that stretch reads APEHEKTEATDKAA.

This sequence belongs to the AccD/PCCB family. In terms of assembly, acetyl-CoA carboxylase is a heterohexamer composed of biotin carboxyl carrier protein (AccB), biotin carboxylase (AccC) and two subunits each of ACCase subunit alpha (AccA) and ACCase subunit beta (AccD).

It is found in the cytoplasm. The catalysed reaction is N(6)-carboxybiotinyl-L-lysyl-[protein] + acetyl-CoA = N(6)-biotinyl-L-lysyl-[protein] + malonyl-CoA. It functions in the pathway lipid metabolism; malonyl-CoA biosynthesis; malonyl-CoA from acetyl-CoA: step 1/1. Its function is as follows. Component of the acetyl coenzyme A carboxylase (ACC) complex. Biotin carboxylase (BC) catalyzes the carboxylation of biotin on its carrier protein (BCCP) and then the CO(2) group is transferred by the transcarboxylase to acetyl-CoA to form malonyl-CoA. The chain is Acetyl-coenzyme A carboxylase carboxyl transferase subunit beta from Brucella anthropi (strain ATCC 49188 / DSM 6882 / CCUG 24695 / JCM 21032 / LMG 3331 / NBRC 15819 / NCTC 12168 / Alc 37) (Ochrobactrum anthropi).